Here is a 495-residue protein sequence, read N- to C-terminus: Glutamyl-tRNA(Gln) amidotransferase subunit A (495 aa).

Catalysis depends on charge relay system residues Lys-75 and Ser-150. Catalysis depends on Ser-174, which acts as the Acyl-ester intermediate.

The protein belongs to the amidase family. GatA subfamily. As to quaternary structure, heterotrimer of A, B and C subunits.

The enzyme catalyses L-glutamyl-tRNA(Gln) + L-glutamine + ATP + H2O = L-glutaminyl-tRNA(Gln) + L-glutamate + ADP + phosphate + H(+). Allows the formation of correctly charged Gln-tRNA(Gln) through the transamidation of misacylated Glu-tRNA(Gln) in organisms which lack glutaminyl-tRNA synthetase. The reaction takes place in the presence of glutamine and ATP through an activated gamma-phospho-Glu-tRNA(Gln). The sequence is that of Glutamyl-tRNA(Gln) amidotransferase subunit A from Paraburkholderia phytofirmans (strain DSM 17436 / LMG 22146 / PsJN) (Burkholderia phytofirmans).